Reading from the N-terminus, the 278-residue chain is NAD-capped RNA hydrolase NudC (278 aa).

Arginine 84 is a binding site for substrate. Residues cysteine 114 and cysteine 117 each contribute to the Zn(2+) site. Glutamate 127 provides a ligand contact to substrate. Residue cysteine 132 participates in Zn(2+) binding. Tyrosine 140 is a binding site for substrate. Residues 141–264 (PRISPSMIVL…SIARYLIEAY (124 aa)) form the Nudix hydrolase domain. Positions 174, 190, and 194 each coordinate a divalent metal cation. The short motif at 175–196 (GFVEPGESAEDCVHREVMEEVQ) is the Nudix box element. 208 to 215 (QCWPFPHS) is a substrate binding site. Glutamate 235 is a binding site for a divalent metal cation. Residue alanine 257 participates in substrate binding.

The protein belongs to the Nudix hydrolase family. NudC subfamily. In terms of assembly, homodimer. It depends on Mg(2+) as a cofactor. Mn(2+) is required as a cofactor. The cofactor is Zn(2+).

It catalyses the reaction a 5'-end NAD(+)-phospho-ribonucleoside in mRNA + H2O = a 5'-end phospho-adenosine-phospho-ribonucleoside in mRNA + beta-nicotinamide D-ribonucleotide + 2 H(+). The enzyme catalyses NAD(+) + H2O = beta-nicotinamide D-ribonucleotide + AMP + 2 H(+). The catalysed reaction is NADH + H2O = reduced beta-nicotinamide D-ribonucleotide + AMP + 2 H(+). Functionally, mRNA decapping enzyme that specifically removes the nicotinamide adenine dinucleotide (NAD) cap from a subset of mRNAs by hydrolyzing the diphosphate linkage to produce nicotinamide mononucleotide (NMN) and 5' monophosphate mRNA. The NAD-cap is present at the 5'-end of some mRNAs and stabilizes RNA against 5'-processing. Has preference for mRNAs with a 5'-end purine. Catalyzes the hydrolysis of a broad range of dinucleotide pyrophosphates. The chain is NAD-capped RNA hydrolase NudC from Pseudomonas syringae pv. tomato (strain ATCC BAA-871 / DC3000).